Here is a 369-residue protein sequence, read N- to C-terminus: Anhydro-N-acetylmuramic acid kinase (369 aa).

12-19 (GTSLDGVD) lines the ATP pocket.

Belongs to the anhydro-N-acetylmuramic acid kinase family.

The catalysed reaction is 1,6-anhydro-N-acetyl-beta-muramate + ATP + H2O = N-acetyl-D-muramate 6-phosphate + ADP + H(+). Its pathway is amino-sugar metabolism; 1,6-anhydro-N-acetylmuramate degradation. The protein operates within cell wall biogenesis; peptidoglycan recycling. Its function is as follows. Catalyzes the specific phosphorylation of 1,6-anhydro-N-acetylmuramic acid (anhMurNAc) with the simultaneous cleavage of the 1,6-anhydro ring, generating MurNAc-6-P. Is required for the utilization of anhMurNAc either imported from the medium or derived from its own cell wall murein, and thus plays a role in cell wall recycling. The sequence is that of Anhydro-N-acetylmuramic acid kinase from Actinobacillus pleuropneumoniae serotype 7 (strain AP76).